The following is a 132-amino-acid chain: U-scoloptoxin(11)-Sa1a (132 aa).

A signal peptide spans 1–19 (MIRFFAFVLFFATQELILC).

It belongs to the scoloptoxin-11 family. Contains 5 disulfide bonds. As to expression, expressed by the venom gland.

The protein localises to the secreted. In Scolopendra alternans (Florida Keys giant centipede), this protein is U-scoloptoxin(11)-Sa1a.